Here is a 341-residue protein sequence, read N- to C-terminus: Eukaryotic translation initiation factor 2 subunit 1 (341 aa).

Residues 18–89 (NELVMVRIES…DKGYIDLSKR (72 aa)) form the S1 motif domain. Residues 301–341 (LMEQLEVENQDGDGEEHEDDDDDDDDEEEEEKPKEKKSSRK) form a disordered region. The span at 303 to 330 (EQLEVENQDGDGEEHEDDDDDDDDEEEE) shows a compositional bias: acidic residues. Residues 331-341 (EKPKEKKSSRK) show a composition bias toward basic and acidic residues.

It belongs to the eIF-2-alpha family. As to quaternary structure, eukaryotic translation initiation factor 2 eIF2 is a heterotrimeric complex composed of an alpha, a beta and a gamma subunit.

It is found in the cytoplasm. The protein localises to the cytosol. Functionally, eIF-2 functions in the early steps of protein synthesis by forming a ternary complex with GTP and initiator tRNA. This complex binds to a 40S ribosomal subunit, followed by mRNA binding to form a 43S pre-initiation complex. Junction of the 60S ribosomal subunit to form the 80S initiation complex is preceded by hydrolysis of the GTP bound to eIF-2 and release of an eIF-2-GDP binary complex. In order for eIF-2 to recycle and catalyze another round of initiation, the GDP bound to eIF-2 must exchange with GTP by way of a reaction catalyzed by eIF2B. The sequence is that of Eukaryotic translation initiation factor 2 subunit 1 (eif2s1) from Dictyostelium discoideum (Social amoeba).